The primary structure comprises 396 residues: DNA excision repair protein ERCC-8 (396 aa).

WD repeat units lie at residues 33–73 (NKDR…LYDL), 88–129 (CSIG…VWDT), 133–173 (QTAD…LCDL), 177–216 (SCSH…LWDV), 235–274 (QAVE…LWNS), 281–321 (LVNY…VYTV), and 325–363 (EQIT…AWVP). Residues 371–396 (DDDETTTKSQLNPAFEDAWSSSDEEG) form a disordered region. 3 positions are modified to phosphoserine: serine 390, serine 391, and serine 392.

Part of the CSA complex (also named DCX(ERCC8) complex), a DCX E3 ubiquitin-protein ligase complex containing ERCC8, RBX1, DDB1 and CUL4A; the CSA complex interacts with RNA polymerase II; upon UV irradiation it interacts with the COP9 signalosome and preferentially with the hyperphosphorylated form of RNA polymerase II. Interacts with ERCC6/CSB (via CIM motif); promoting recruitment to lesion-stalled RNA polymerase II (Pol II). Interacts with KIAA1530/UVSSA. Interacts with a subunit of RNA polymerase II TFIIH.

Its subcellular location is the nucleus. The protein localises to the chromosome. It is found in the nucleus matrix. The protein operates within protein modification; protein ubiquitination. Functionally, substrate-recognition component of the CSA complex, a DCX (DDB1-CUL4-X-box) E3 ubiquitin-protein ligase complex, involved in transcription-coupled nucleotide excision repair (TC-NER), a process during which RNA polymerase II-blocking lesions are rapidly removed from the transcribed strand of active genes. Following recruitment to lesion-stalled RNA polymerase II (Pol II), the CSA complex mediates ubiquitination of Pol II subunit POLR2A/RPB1 at 'Lys-1268', a critical TC-NER checkpoint, governing RNA Pol II stability and initiating DNA damage excision by TFIIH recruitment. The CSA complex also promotes the ubiquitination and subsequent proteasomal degradation of ERCC6/CSB in a UV-dependent manner; ERCC6 degradation is essential for the recovery of RNA synthesis after transcription-coupled repair. Also plays a role in DNA double-strand breaks (DSSBs) repair by non-homologous end joining (NHEJ). This chain is DNA excision repair protein ERCC-8, found in Homo sapiens (Human).